We begin with the raw amino-acid sequence, 214 residues long: Pyridoxine/pyridoxamine 5'-phosphate oxidase (214 aa).

Substrate contacts are provided by residues 9–12 and Lys67; that span reads RREY. Residues 62–67, 77–78, Arg83, Lys84, and Gln106 contribute to the FMN site; these read RTVLLK and YS. 3 residues coordinate substrate: Tyr124, Arg128, and Ser132. Residues 141–142 and Trp186 each bind FMN; that span reads QS. A substrate-binding site is contributed by 192–194; the sequence is RLH. Arg196 is an FMN binding site.

Belongs to the pyridoxamine 5'-phosphate oxidase family. Homodimer. Requires FMN as cofactor.

It catalyses the reaction pyridoxamine 5'-phosphate + O2 + H2O = pyridoxal 5'-phosphate + H2O2 + NH4(+). The catalysed reaction is pyridoxine 5'-phosphate + O2 = pyridoxal 5'-phosphate + H2O2. It functions in the pathway cofactor metabolism; pyridoxal 5'-phosphate salvage; pyridoxal 5'-phosphate from pyridoxamine 5'-phosphate: step 1/1. Its pathway is cofactor metabolism; pyridoxal 5'-phosphate salvage; pyridoxal 5'-phosphate from pyridoxine 5'-phosphate: step 1/1. Functionally, catalyzes the oxidation of either pyridoxine 5'-phosphate (PNP) or pyridoxamine 5'-phosphate (PMP) into pyridoxal 5'-phosphate (PLP). This Porphyromonas gingivalis (strain ATCC BAA-308 / W83) protein is Pyridoxine/pyridoxamine 5'-phosphate oxidase.